Here is a 331-residue protein sequence, read N- to C-terminus: Ketol-acid reductoisomerase (NADP(+)) (331 aa).

One can recognise a KARI N-terminal Rossmann domain in the interval 2-182 (IKKYYDADCN…GAGRAGILET (181 aa)). NADP(+) contacts are provided by residues 25–28 (YGSQ), Arg-48, and Ser-51. The active site involves His-108. Residue Gly-134 participates in NADP(+) binding. Residues 183 to 329 (TFREETETDL…AELRKMMSWI (147 aa)) enclose the KARI C-terminal knotted domain. Mg(2+)-binding residues include Asp-191, Glu-195, Glu-227, and Glu-231. Ser-252 is a binding site for substrate.

It belongs to the ketol-acid reductoisomerase family. Mg(2+) is required as a cofactor.

It carries out the reaction (2R)-2,3-dihydroxy-3-methylbutanoate + NADP(+) = (2S)-2-acetolactate + NADPH + H(+). It catalyses the reaction (2R,3R)-2,3-dihydroxy-3-methylpentanoate + NADP(+) = (S)-2-ethyl-2-hydroxy-3-oxobutanoate + NADPH + H(+). Its pathway is amino-acid biosynthesis; L-isoleucine biosynthesis; L-isoleucine from 2-oxobutanoate: step 2/4. The protein operates within amino-acid biosynthesis; L-valine biosynthesis; L-valine from pyruvate: step 2/4. Its function is as follows. Involved in the biosynthesis of branched-chain amino acids (BCAA). Catalyzes an alkyl-migration followed by a ketol-acid reduction of (S)-2-acetolactate (S2AL) to yield (R)-2,3-dihydroxy-isovalerate. In the isomerase reaction, S2AL is rearranged via a Mg-dependent methyl migration to produce 3-hydroxy-3-methyl-2-ketobutyrate (HMKB). In the reductase reaction, this 2-ketoacid undergoes a metal-dependent reduction by NADPH to yield (R)-2,3-dihydroxy-isovalerate. This is Ketol-acid reductoisomerase (NADP(+)) from Brachyspira hyodysenteriae (strain ATCC 49526 / WA1).